The chain runs to 252 residues: Triosephosphate isomerase (252 aa).

10–12 (NWK) lines the substrate pocket. The Electrophile role is filled by H96. The Proton acceptor role is filled by E168. Residues G174, S214, and 235–236 (GG) each bind substrate.

Belongs to the triosephosphate isomerase family. In terms of assembly, homodimer.

Its subcellular location is the cytoplasm. It carries out the reaction D-glyceraldehyde 3-phosphate = dihydroxyacetone phosphate. The protein operates within carbohydrate biosynthesis; gluconeogenesis. It functions in the pathway carbohydrate degradation; glycolysis; D-glyceraldehyde 3-phosphate from glycerone phosphate: step 1/1. Involved in the gluconeogenesis. Catalyzes stereospecifically the conversion of dihydroxyacetone phosphate (DHAP) to D-glyceraldehyde-3-phosphate (G3P). This Streptococcus equi subsp. zooepidemicus (strain MGCS10565) protein is Triosephosphate isomerase.